Consider the following 241-residue polypeptide: tRNA (guanine-N(7)-)-methyltransferase (241 aa).

The span at 1-10 (MTESNETPNT) shows a compositional bias: polar residues. Residues 1 to 21 (MTESNETPNTPEAGDESKHRR) are disordered. S-adenosyl-L-methionine contacts are provided by E71, E96, D123, and D146. The active site involves D146. Substrate is bound by residues K150, D182, and 219-222 (TKFE).

The protein belongs to the class I-like SAM-binding methyltransferase superfamily. TrmB family.

The enzyme catalyses guanosine(46) in tRNA + S-adenosyl-L-methionine = N(7)-methylguanosine(46) in tRNA + S-adenosyl-L-homocysteine. The protein operates within tRNA modification; N(7)-methylguanine-tRNA biosynthesis. Functionally, catalyzes the formation of N(7)-methylguanine at position 46 (m7G46) in tRNA. In Pseudomonas fluorescens (strain SBW25), this protein is tRNA (guanine-N(7)-)-methyltransferase.